The chain runs to 518 residues: Zinc finger protein 776 (518 aa).

The KRAB domain maps to 14–89; it reads VTFEDVAVNF…HWTGVCTKKV (76 aa). Residues lysine 171, lysine 196, lysine 220, and lysine 247 each participate in a glycyl lysine isopeptide (Lys-Gly) (interchain with G-Cter in SUMO2) cross-link. The segment at 208-230 adopts a C2H2-type 1; degenerate zinc-finger fold; sequence YICGESTIPFSNKHSLVLHQRLL. The C2H2-type 2; degenerate zinc-finger motif lies at 236 to 258; it reads YVCSDSGKFTSKSNSFNNHQGVR. C2H2-type zinc fingers lie at residues 264–286, 292–314, 320–342, 348–370, 376–398, 404–426, and 432–454; these read YQCGQCDESFWYKAHLTEHQRVH, YECGECDKSFSHKHSLVDHQRVH, YECDECGKSFSHKRSLVHHQRVH, YQCGECGKSFNHKCNLIQHQRVH, FECTACGKLFRSNSHLKEHQRVH, YECKECRKSFRYKSHLTEHQRVH, and YECRECGKCFHQKGSLIQHQQIH. The C2H2-type 10; degenerate zinc finger occupies 460–482; sequence HECGECGKCFHQKGSLIRHQQIH. The C2H2-type 11 zinc finger occupies 488 to 510; sequence HECGECGKCFRQKGNLIKHQRVH.

Belongs to the krueppel C2H2-type zinc-finger protein family.

The protein localises to the nucleus. May be involved in transcriptional regulation. This chain is Zinc finger protein 776 (ZNF776), found in Homo sapiens (Human).